The sequence spans 122 residues: uncharacterized protein (122 aa).

Over residues 79–90 (NERVTSRVTNSR) the composition is skewed to polar residues. Residues 79–122 (NERVTSRVTNSRTESESNGNGNATGNTSSNANSNGNANGIYIRK) are disordered. Low complexity predominate over residues 94 to 122 (ESNGNGNATGNTSSNANSNGNANGIYIRK).

This is an uncharacterized protein from Leptolyngbya boryana (Plectonema boryanum).